Here is a 452-residue protein sequence, read N- to C-terminus: Exodeoxyribonuclease 7 large subunit (452 aa).

The protein belongs to the XseA family. As to quaternary structure, heterooligomer composed of large and small subunits.

The protein localises to the cytoplasm. It carries out the reaction Exonucleolytic cleavage in either 5'- to 3'- or 3'- to 5'-direction to yield nucleoside 5'-phosphates.. Its function is as follows. Bidirectionally degrades single-stranded DNA into large acid-insoluble oligonucleotides, which are then degraded further into small acid-soluble oligonucleotides. This is Exodeoxyribonuclease 7 large subunit from Bacillus mycoides (strain KBAB4) (Bacillus weihenstephanensis).